Consider the following 138-residue polypeptide: Small ribosomal subunit protein uS11c (138 aa).

The disordered stretch occupies residues 1-24 (MTKPIPRIGSRKNGRISSRKNGRR). Basic residues predominate over residues 9–24 (GSRKNGRISSRKNGRR).

It belongs to the universal ribosomal protein uS11 family. As to quaternary structure, part of the 30S ribosomal subunit.

Its subcellular location is the plastid. It is found in the chloroplast. The chain is Small ribosomal subunit protein uS11c from Chloranthus spicatus (Chulantree).